A 330-amino-acid chain; its full sequence is Aspartate--ammonia ligase (330 aa).

This sequence belongs to the class-II aminoacyl-tRNA synthetase family. AsnA subfamily.

Its subcellular location is the cytoplasm. The catalysed reaction is L-aspartate + NH4(+) + ATP = L-asparagine + AMP + diphosphate + H(+). Its pathway is amino-acid biosynthesis; L-asparagine biosynthesis; L-asparagine from L-aspartate (ammonia route): step 1/1. The polypeptide is Aspartate--ammonia ligase (Escherichia coli O17:K52:H18 (strain UMN026 / ExPEC)).